A 268-amino-acid polypeptide reads, in one-letter code: MKRVALLVQYDGSHYSGWQKQKNANTIQEILDKALLKITNHTVKTFAAGRTDAGVHASGQVIHFDIDCVIPGNSYSDVLNSLLPSTIRILESVEVKDSWHACYSASYRHYRYVINNSKFPNLFINNWSWHRYQKVLDEVLMLNASKKMEGEHDFFAFQKSGSNRQNSITKIKNIDVKRVEDLILVDIKATGFLYGMVRLIVGQLVLVGEKKISPEIFTDRWVNKKKNDVKESAPAKGLCFVNAVYEENVFKKIKNNDFFPIFLIEGFS.

Asp-52 acts as the Nucleophile in catalysis. Tyr-110 contacts substrate.

It belongs to the tRNA pseudouridine synthase TruA family. As to quaternary structure, homodimer.

The catalysed reaction is uridine(38/39/40) in tRNA = pseudouridine(38/39/40) in tRNA. Its function is as follows. Formation of pseudouridine at positions 38, 39 and 40 in the anticodon stem and loop of transfer RNAs. The protein is tRNA pseudouridine synthase A of Prochlorococcus marinus (strain AS9601).